The primary structure comprises 328 residues: DNA-directed RNA polymerase subunit alpha (328 aa).

The tract at residues 1 to 231 (MIYQMQMPTK…DHITFFANFS (231 aa)) is alpha N-terminal domain (alpha-NTD). Residues 247 to 328 (DEFESMRKLL…MDITRYQLKG (82 aa)) are alpha C-terminal domain (alpha-CTD).

It belongs to the RNA polymerase alpha chain family. Homodimer. The RNAP catalytic core consists of 2 alpha, 1 beta, 1 beta' and 1 omega subunit. When a sigma factor is associated with the core the holoenzyme is formed, which can initiate transcription.

It catalyses the reaction RNA(n) + a ribonucleoside 5'-triphosphate = RNA(n+1) + diphosphate. In terms of biological role, DNA-dependent RNA polymerase catalyzes the transcription of DNA into RNA using the four ribonucleoside triphosphates as substrates. The protein is DNA-directed RNA polymerase subunit alpha of Chlorobaculum tepidum (strain ATCC 49652 / DSM 12025 / NBRC 103806 / TLS) (Chlorobium tepidum).